The following is a 222-amino-acid chain: Cytidylate kinase (222 aa).

An ATP-binding site is contributed by 12 to 20; that stretch reads GPSGAGKGT.

This sequence belongs to the cytidylate kinase family. Type 1 subfamily.

Its subcellular location is the cytoplasm. It catalyses the reaction CMP + ATP = CDP + ADP. It carries out the reaction dCMP + ATP = dCDP + ADP. This Methylococcus capsulatus (strain ATCC 33009 / NCIMB 11132 / Bath) protein is Cytidylate kinase.